Here is a 360-residue protein sequence, read N- to C-terminus: Peptide chain release factor 1 (360 aa).

Position 235 is an N5-methylglutamine (glutamine 235). The interval 284 to 313 is disordered; sequence AKRQQAEASTRRNLLGSGDRSDRNRTYNFP.

The protein belongs to the prokaryotic/mitochondrial release factor family. Methylated by PrmC. Methylation increases the termination efficiency of RF1.

Its subcellular location is the cytoplasm. In terms of biological role, peptide chain release factor 1 directs the termination of translation in response to the peptide chain termination codons UAG and UAA. This is Peptide chain release factor 1 from Escherichia coli O127:H6 (strain E2348/69 / EPEC).